The following is a 225-amino-acid chain: Type II restriction enzyme BslI subunit alpha (225 aa).

2 consecutive C4-type zinc fingers follow at residues 36–53 (CKDCGQYWHTSLSECYFC) and 63–84 (CNSCGKKYSLTSSSKSCDTDGC).

In terms of assembly, heterotetramer of two alpha and two beta subunits. The alpha subunit is believed to be responsible for DNA recognition, while the beta subunit is thought to mediate cleavage. Zn(2+) is required as a cofactor.

The catalysed reaction is Endonucleolytic cleavage of DNA to give specific double-stranded fragments with terminal 5'-phosphates.. Its function is as follows. A P subtype restriction enzyme that recognizes the double-stranded sequence 5'-CCN(7)GG-3' and cleaves after N-7. The chain is Type II restriction enzyme BslI subunit alpha from Bacillus sp. (strain NEB-606).